The sequence spans 203 residues: Holliday junction branch migration complex subunit RuvA (203 aa).

The domain I stretch occupies residues 1-64; the sequence is MIGRLRGIIL…EDAQLLYGFN (64 aa). The segment at 65–142 is domain II; that stretch reads NKQERTLFKE…KGLHGDLFTP (78 aa). The interval 143 to 154 is flexible linker; the sequence is AVDLVLTSPASP. Residues 155 to 203 are domain III; sequence TSEDAEQEAVAALVALGYKPQEASRMVSKIARPDASSETLIRDALRAAL.

It belongs to the RuvA family. Homotetramer. Forms an RuvA(8)-RuvB(12)-Holliday junction (HJ) complex. HJ DNA is sandwiched between 2 RuvA tetramers; dsDNA enters through RuvA and exits via RuvB. An RuvB hexamer assembles on each DNA strand where it exits the tetramer. Each RuvB hexamer is contacted by two RuvA subunits (via domain III) on 2 adjacent RuvB subunits; this complex drives branch migration. In the full resolvosome a probable DNA-RuvA(4)-RuvB(12)-RuvC(2) complex forms which resolves the HJ.

The protein localises to the cytoplasm. The RuvA-RuvB-RuvC complex processes Holliday junction (HJ) DNA during genetic recombination and DNA repair, while the RuvA-RuvB complex plays an important role in the rescue of blocked DNA replication forks via replication fork reversal (RFR). RuvA specifically binds to HJ cruciform DNA, conferring on it an open structure. The RuvB hexamer acts as an ATP-dependent pump, pulling dsDNA into and through the RuvAB complex. HJ branch migration allows RuvC to scan DNA until it finds its consensus sequence, where it cleaves and resolves the cruciform DNA. The sequence is that of Holliday junction branch migration complex subunit RuvA from Salmonella agona (strain SL483).